Here is an 82-residue protein sequence, read N- to C-terminus: Toxin NaTx-13 (82 aa).

Residues 6–70 form the LCN-type CS-alpha/beta domain; that stretch reads PGGYPVNQFK…KNSIEVFSCG (65 aa). Disulfide bonds link cysteine 16–cysteine 69, cysteine 20–cysteine 44, cysteine 30–cysteine 49, and cysteine 34–cysteine 51.

Belongs to the long (4 C-C) scorpion toxin superfamily. Sodium channel inhibitor family. Expressed by the venom gland.

The protein resides in the secreted. In terms of biological role, probable sodium channel inhibitor. In Centruroides sculpturatus (Arizona bark scorpion), this protein is Toxin NaTx-13.